The primary structure comprises 530 residues: Autoinducer-2 kinase (530 aa).

It belongs to the FGGY kinase family.

Its subcellular location is the cytoplasm. The catalysed reaction is (S)-4,5-dihydroxypentane-2,3-dione + ATP = (2S)-2-hydroxy-3,4-dioxopentyl phosphate + ADP + H(+). In terms of biological role, catalyzes the phosphorylation of autoinducer-2 (AI-2) to phospho-AI-2, which subsequently inactivates the transcriptional regulator LsrR and leads to the transcription of the lsr operon. Phosphorylates the ring-open form of (S)-4,5-dihydroxypentane-2,3-dione (DPD), which is the precursor to all AI-2 signaling molecules, at the C5 position. The protein is Autoinducer-2 kinase of Escherichia coli (strain SMS-3-5 / SECEC).